Reading from the N-terminus, the 338-residue chain is MAKSGLLLIHPAITTTPEEVEKAKADAVAADVKIANQFLINKVNEGSVKLQKGIYDVIYYLTPEAPDAILFPKKLIGALNEALKVGGVLYGLSDKYKIDALVNDFDIVSDSGKYHWVKKVNMAVKAEPVAVPLKKSEKSEPSKTLPSFKKAGESKLPSFKKAANKPLPTFKKKVEEAKPKVEARVHKAENDDDELEDEEDENLFDASRSKYFDEDDSESLDEDDLLNEEDAKNIGGITMITCGKSKTKKKKACKDCSCGIKEEEEAEIDNIRSQQDTVVKFTEDELTEIDFTIDGKKVGGCGSCSLGDAFRCTGCPYLGLPAFKPGEPINLDSITDDL.

An N-terminal SAM-like domain region spans residues methionine 1–lysine 165. Residues proline 166–lysine 232 are linker. The tract at residues valine 181–aspartate 223 is disordered. Acidic residues-rich tracts occupy residues asparagine 190–leucine 203 and aspartate 213–aspartate 223. [2Fe-2S] cluster is bound by residues cysteine 242, cysteine 253, cysteine 256, and cysteine 258. Residues cysteine 242–cysteine 258 form a fe-S binding site A region. The [4Fe-4S] cluster site is built by cysteine 301, cysteine 304, cysteine 312, and cysteine 315. 2 consecutive short sequence motifs (cx2C motif) follow at residues cysteine 301–cysteine 304 and cysteine 312–cysteine 315. Residues cysteine 301–cysteine 315 are fe-S binding site B.

This sequence belongs to the anamorsin family. In terms of assembly, monomer. Interacts with TAH18. Interacts with MIA40. The cofactor is [2Fe-2S] cluster. It depends on [4Fe-4S] cluster as a cofactor.

It localises to the cytoplasm. The protein resides in the mitochondrion intermembrane space. Component of the cytosolic iron-sulfur (Fe-S) protein assembly (CIA) machinery required for the maturation of extramitochondrial Fe-S proteins. Part of an electron transfer chain functioning in an early step of cytosolic Fe-S biogenesis, facilitating the de novo assembly of a [4Fe-4S] cluster on the scaffold complex CFD1-NBP35. Electrons are transferred to DRE2 from NADPH via the FAD- and FMN-containing protein TAH18. TAH18-DRE2 are also required for the assembly of the diferric tyrosyl radical cofactor of ribonucleotide reductase (RNR), probably by providing electrons for reduction during radical cofactor maturation in the catalytic small subunit RNR2. The polypeptide is Fe-S cluster assembly protein DRE2 (Candida glabrata (strain ATCC 2001 / BCRC 20586 / JCM 3761 / NBRC 0622 / NRRL Y-65 / CBS 138) (Yeast)).